The chain runs to 91 residues: Acylphosphatase (91 aa).

Positions 5–91 (CLHAYVGGRV…QGIAGFIVRR (87 aa)) constitute an Acylphosphatase-like domain. Residues R20 and N38 contribute to the active site.

The protein belongs to the acylphosphatase family.

The catalysed reaction is an acyl phosphate + H2O = a carboxylate + phosphate + H(+). This Pseudomonas paraeruginosa (strain DSM 24068 / PA7) (Pseudomonas aeruginosa (strain PA7)) protein is Acylphosphatase (acyP).